A 142-amino-acid polypeptide reads, in one-letter code: Hemoglobin subunit alpha-2 (142 aa).

In terms of domain architecture, Globin spans Val2–Arg142. His59 contacts O2. His88 contributes to the heme b binding site.

The protein belongs to the globin family. Heterotetramer of two alpha chains and two beta chains. Red blood cells.

Involved in oxygen transport from the lung to the various peripheral tissues. Functionally, hemopressin acts as an antagonist peptide of the cannabinoid receptor CNR1. Hemopressin-binding efficiently blocks cannabinoid receptor CNR1 and subsequent signaling. The sequence is that of Hemoglobin subunit alpha-2 (HBA2) from Hylobates lar (Lar gibbon).